Reading from the N-terminus, the 295-residue chain is Elongation factor Ts (295 aa).

The interval threonine 79–valine 82 is involved in Mg(2+) ion dislocation from EF-Tu.

This sequence belongs to the EF-Ts family.

Its subcellular location is the cytoplasm. Its function is as follows. Associates with the EF-Tu.GDP complex and induces the exchange of GDP to GTP. It remains bound to the aminoacyl-tRNA.EF-Tu.GTP complex up to the GTP hydrolysis stage on the ribosome. In Bacillus mycoides (strain KBAB4) (Bacillus weihenstephanensis), this protein is Elongation factor Ts.